Consider the following 793-residue polypeptide: E3 UFM1-protein ligase 1 (793 aa).

An N-acetylalanine modification is found at Ala2. A mediates interaction with DDRGK1 region spans residues 2–200; it reads ADAWEEIRRL…RGLFSAITRP (199 aa). Residues 2 to 212 are required for E3 UFM1-protein ligase activity; sequence ADAWEEIRRL…VNSLISKYGF (211 aa). The interval 121 to 250 is involved in CDK5RAP3-binding; it reads DRLAEEVNDK…KAVFVPDIYS (130 aa). The tract at residues 200–400 is mediates interaction with TRIP4; it reads PTAVNSLISK…NPVHLITEED (201 aa). The interval 407–473 is disordered; that stretch reads LESVSTSKKD…SSHTGKKKPE (67 aa). Position 433 is an omega-N-methylarginine (Arg433). A Phosphoserine modification is found at Ser458. The segment at 490-684 is mediates interaction with CDK5RAP3; it reads IQDAPEEFIS…QLKVTEDPAL (195 aa). Thr536 carries the post-translational modification Phosphothreonine.

Belongs to the UFL1 family. Catalytic component of the UFM1 ribosome E3 ligase (UREL) complex, composed of UFL1, DDRGK1 and CDK5RAP3. Interacts with E2-like enzyme UFC1. Interacts with RELA. Interacts with NBN; promoting recruitment to double-strand breaks following DNA damage. Interacts (when phosphorylated) with YWHAG/14-3-3-gamma; sequestering UFL1 and preventing its association with PDCD1/PD-1 substrate. Post-translationally, ubiquitinated, leading to its degradation by the proteasome. Interaction with CDK5RAP3 protects both proteins against ubiquitination and degradation via the proteasome. Phosphorylation at Thr-536 by AMPK promotes its interaction with YWHAG/14-3-3-gamma, thereby preventing UFL1 association with PDCD1/PD-1 substrate.

It localises to the endoplasmic reticulum membrane. The protein resides in the cytoplasm. Its subcellular location is the cytosol. The protein localises to the nucleus. It is found in the chromosome. Functionally, E3 protein ligase that mediates ufmylation, the covalent attachment of the ubiquitin-like modifier UFM1 to lysine residues on target proteins, and which plays a key role in various processes, such as ribosome recycling, response to DNA damage, interferon response or reticulophagy (also called ER-phagy). Catalyzes ufmylation of many protein, such as CD274/PD-L1, CDK5RAP3, CYB5R3, DDRGK1, EIF6, histone H4, MRE11, P4HB, PDCD1/PD-1, TRIP4, RPN1, RPS20/uS10, RPL10/uL16, RPL26/uL24, SYVN1/HRD1 and TP53/p53. As part of the UREL complex, plays a key role in ribosome recycling by catalyzing mono-ufmylation of RPL26/uL24 subunit of the 60S ribosome. Ufmylation of RPL26/uL24 occurs on free 60S ribosomes following ribosome dissociation: it weakens the junction between post-termination 60S subunits and SEC61 translocons, promoting release and recycling of the large ribosomal subunit from the endoplasmic reticulum membrane. Ufmylation of RPL26/uL24 and subsequent 60S ribosome recycling either take place after normal termination of translation or after ribosome stalling during cotranslational translocation at the endoplasmic reticulum. Involved in reticulophagy in response to endoplasmic reticulum stress by mediating ufmylation of proteins such as CYB5R3 and RPN1, thereby promoting lysosomal degradation of ufmylated proteins. Ufmylation in response to endoplasmic reticulum stress is essential for processes such as hematopoiesis, blood vessel morphogenesis or inflammatory response. Mediates ufmylation of DDRGK1 and CDK5RAP3; the role of these modifications is however unclear: as both DDRGK1 and CDK5RAP3 act as substrate adapters for ufmylation, it is uncertain whether ufmylation of these proteins is, a collateral effect or is required for ufmylation. Acts as a negative regulator of T-cell activation by mediating ufmylation and stabilization of PDCD1/PD-1. Also involved in the response to DNA damage: recruited to double-strand break sites following DNA damage and mediates monoufmylation of histone H4 and ufmylation of MRE11. Mediates ufmylation of TP53/p53, promoting its stability. Catalyzes ufmylation of TRIP4, thereby playing a role in nuclear receptor-mediated transcription. Required for hematopoietic stem cell function and hematopoiesis. In Macaca fascicularis (Crab-eating macaque), this protein is E3 UFM1-protein ligase 1.